The sequence spans 513 residues: Carboxyethyl-arginine beta-lactam-synthase (513 aa).

The Mg(2+) site is built by Asp-253 and Asp-351.

The protein belongs to the asparagine synthetase family. As to quaternary structure, homodimer. Requires Mg(2+) as cofactor.

It carries out the reaction N(2)-(2-carboxyethyl)-L-arginine + ATP = deoxyamidinoproclavaminate + AMP + diphosphate + H(+). It functions in the pathway antibiotic biosynthesis; clavulanate biosynthesis; clavulanate from D-glyceraldehyde 3-phosphate and L-arginine: step 2/8. The sequence is that of Carboxyethyl-arginine beta-lactam-synthase (bls) from Streptomyces clavuligerus.